The following is a 347-amino-acid chain: Microtubule-associated protein Jupiter (347 aa).

Residues 1–14 are compositionally biased toward polar residues; it reads MISNFDCTDNQASS. Residues 1–33 are disordered; sequence MISNFDCTDNQASSKVLRPPGGGSSDIFGSEMP. Ser-24 carries the phosphoserine modification. Phosphothreonine occurs at positions 35 and 96. A phosphoserine mark is found at Ser-105, Ser-134, and Ser-145. Disordered stretches follow at residues 127–193 and 303–347; these read HYNG…PTPP and GNPV…SGLW. The segment covering 132–145 has biased composition (low complexity); it reads SGSVSSASSSVSSS. The segment covering 146 to 164 has biased composition (polar residues); that stretch reads TENLKMNSGSRSVFRNMST. Pro residues predominate over residues 181–193; the sequence is PPSPVPIEVPTPP.

Belongs to the MAP Jupiter family.

It localises to the nucleus. Its subcellular location is the cytoplasm. The protein resides in the cytoskeleton. It is found in the spindle. In terms of biological role, binds to all microtubule populations. The sequence is that of Microtubule-associated protein Jupiter from Drosophila yakuba (Fruit fly).